Here is a 195-residue protein sequence, read N- to C-terminus: Early light-induced protein 1, chloroplastic (195 aa).

A chloroplast-targeting transit peptide spans 1 to 46 (MATASFNMQSVFAGGLTTRKINTNKLFSAGSFPNLKRNYPVGVRCM). A disordered region spans residues 46 to 81 (MAEGGPTNEDSSPAPSTSAAQPLPKSPSPPPPMKPK). Positions 56–68 (SSPAPSTSAAQPL) are enriched in low complexity. Residues 69-79 (PKSPSPPPPMK) show a composition bias toward pro residues. 3 helical membrane passes run 104–124 (LAMV…ENVL), 131–151 (GVSW…VPLF), and 175–195 (FAML…GTLV).

The protein belongs to the ELIP/psbS family.

The protein resides in the plastid. It is found in the chloroplast thylakoid membrane. Functionally, prevents excess accumulation of free chlorophyll by inhibiting the entire chlorophyll biosynthesis pathway (e.g. 5-aminolevulinate synthesis and Mg-protoporphyrin IX chelatase activity), and hence prevent photooxidative stress. Probably involved in the integration of pigments into the mature light-harvesting pigment-protein complexes. Light-harvesting chlorophyll (LHC) a/b-binding protein required to ensure a high rate of chlorophyll accumulation during deetiolation in continuous high light. Involved in seed germination. May fulfill a photoprotective functions. The polypeptide is Early light-induced protein 1, chloroplastic (Arabidopsis thaliana (Mouse-ear cress)).